A 25-amino-acid chain; its full sequence is Flagellar filament core protein flaB1 (25 aa).

The protein belongs to the bacterial flagellin family. In terms of assembly, the flagellum consists of an outer layer composed of two sheath proteins, flaA1 (44 kDa) and flaA2 (35 kDa) around a core that contains three proteins flaB1 (37 kDa), flaB2 (34 kDa) and flaB3 (32 kDa).

The protein localises to the periplasmic flagellum. It is found in the periplasm. Its function is as follows. Component of the core of the flagella. This chain is Flagellar filament core protein flaB1 (flaB1), found in Brachyspira hyodysenteriae (Treponema hyodysenteriae).